Consider the following 171-residue polypeptide: 3-hydroxydecanoyl-[acyl-carrier-protein] dehydratase (171 aa).

The active site involves His70.

It belongs to the thioester dehydratase family. FabA subfamily. As to quaternary structure, homodimer.

The protein localises to the cytoplasm. The enzyme catalyses a (3R)-hydroxyacyl-[ACP] = a (2E)-enoyl-[ACP] + H2O. The catalysed reaction is (3R)-hydroxydecanoyl-[ACP] = (2E)-decenoyl-[ACP] + H2O. It carries out the reaction (2E)-decenoyl-[ACP] = (3Z)-decenoyl-[ACP]. Its pathway is lipid metabolism; fatty acid biosynthesis. Necessary for the introduction of cis unsaturation into fatty acids. Catalyzes the dehydration of (3R)-3-hydroxydecanoyl-ACP to E-(2)-decenoyl-ACP and then its isomerization to Z-(3)-decenoyl-ACP. Can catalyze the dehydratase reaction for beta-hydroxyacyl-ACPs with saturated chain lengths up to 16:0, being most active on intermediate chain length. This chain is 3-hydroxydecanoyl-[acyl-carrier-protein] dehydratase, found in Chromohalobacter salexigens (strain ATCC BAA-138 / DSM 3043 / CIP 106854 / NCIMB 13768 / 1H11).